Consider the following 71-residue polypeptide: Translation initiation factor IF-1 (71 aa).

The S1-like domain occupies 1–71 (MAKQSAIEQD…LSKARITYRY (71 aa)).

The protein belongs to the IF-1 family. As to quaternary structure, component of the 30S ribosomal translation pre-initiation complex which assembles on the 30S ribosome in the order IF-2 and IF-3, IF-1 and N-formylmethionyl-tRNA(fMet); mRNA recruitment can occur at any time during PIC assembly.

It is found in the cytoplasm. Its function is as follows. One of the essential components for the initiation of protein synthesis. Stabilizes the binding of IF-2 and IF-3 on the 30S subunit to which N-formylmethionyl-tRNA(fMet) subsequently binds. Helps modulate mRNA selection, yielding the 30S pre-initiation complex (PIC). Upon addition of the 50S ribosomal subunit IF-1, IF-2 and IF-3 are released leaving the mature 70S translation initiation complex. This chain is Translation initiation factor IF-1, found in Flavobacterium psychrophilum (strain ATCC 49511 / DSM 21280 / CIP 103535 / JIP02/86).